The chain runs to 201 residues: 3-isopropylmalate dehydratase small subunit (201 aa).

The protein belongs to the LeuD family. LeuD type 1 subfamily. In terms of assembly, heterodimer of LeuC and LeuD.

It carries out the reaction (2R,3S)-3-isopropylmalate = (2S)-2-isopropylmalate. Its pathway is amino-acid biosynthesis; L-leucine biosynthesis; L-leucine from 3-methyl-2-oxobutanoate: step 2/4. Its function is as follows. Catalyzes the isomerization between 2-isopropylmalate and 3-isopropylmalate, via the formation of 2-isopropylmaleate. This Cronobacter sakazakii (strain ATCC BAA-894) (Enterobacter sakazakii) protein is 3-isopropylmalate dehydratase small subunit.